Consider the following 261-residue polypeptide: Na(+)-translocating NADH-quinone reductase subunit C (261 aa).

A helical membrane pass occupies residues 11 to 31; sequence LLVALVVCLVSSVFVAGAAVA. At Thr-230 the chain carries FMN phosphoryl threonine.

This sequence belongs to the NqrC family. As to quaternary structure, composed of six subunits; NqrA, NqrB, NqrC, NqrD, NqrE and NqrF. FMN serves as cofactor.

It is found in the cell inner membrane. It catalyses the reaction a ubiquinone + n Na(+)(in) + NADH + H(+) = a ubiquinol + n Na(+)(out) + NAD(+). NQR complex catalyzes the reduction of ubiquinone-1 to ubiquinol by two successive reactions, coupled with the transport of Na(+) ions from the cytoplasm to the periplasm. NqrA to NqrE are probably involved in the second step, the conversion of ubisemiquinone to ubiquinol. The sequence is that of Na(+)-translocating NADH-quinone reductase subunit C from Pseudomonas aeruginosa (strain ATCC 15692 / DSM 22644 / CIP 104116 / JCM 14847 / LMG 12228 / 1C / PRS 101 / PAO1).